The chain runs to 1288 residues: Structural maintenance of chromosomes protein 4 (1288 aa).

Positions 1 to 10 (MPRKGTQPST) are enriched in polar residues. Residues 1 to 55 (MPRKGTQPSTARRREEGPPPPSPDGASSDAEPEPPSGRTESPATAAETASEELDN) form a disordered region. Phosphoserine is present on residues Ser22 and Ser28. Residue Thr39 is modified to Phosphothreonine. Over residues 39-48 (TESPATAAET) the composition is skewed to low complexity. Phosphoserine occurs at positions 41 and 50. ATP is bound at residue 113–120 (GPNGSGKS). Phosphoserine is present on Ser143. Residues 272–588 (RRVEILNEHR…LFQKVEEAKS (317 aa)) are a coiled coil. Residues Lys381 and Lys679 each carry the N6-acetyllysine modification. Residues 613–727 (PGIYGRLGDL…ADNLDQATRV (115 aa)) enclose the SMC hinge domain. Positions 767-1020 (LVIEISEEEV…ALSIKLKLEQ (254 aa)) form a coiled coil. Phosphoserine is present on residues Ser982 and Ser1056. A coiled-coil region spans residues 1109–1129 (ELDKITYERDSFRQAYEDLRK).

This sequence belongs to the SMC family. SMC4 subfamily. As to quaternary structure, forms a heterodimer with SMC2. Component of the condensin complex, which contains the SMC2 and SMC4 heterodimer, and three non SMC subunits that probably regulate the complex: BRRN1/CAPH, CNAP1/CAPD2 and CAPG. Widely expressed. Higher expression in testis, colon, thymus.

Its subcellular location is the nucleus. The protein localises to the cytoplasm. The protein resides in the chromosome. In terms of biological role, central component of the condensin complex, a complex required for conversion of interphase chromatin into mitotic-like condense chromosomes. The condensin complex probably introduces positive supercoils into relaxed DNA in the presence of type I topoisomerases and converts nicked DNA into positive knotted forms in the presence of type II topoisomerases. In Homo sapiens (Human), this protein is Structural maintenance of chromosomes protein 4 (SMC4).